We begin with the raw amino-acid sequence, 1104 residues long: Extended synaptotagmin-1 (1104 aa).

The residue at position 1 (M1) is an N-acetylmethionine. The Cytoplasmic segment spans residues 1 to 38 (MERSPGEGPSPSPMDQPSAPSDPTDQPPAAHAKPDPGS). The tract at residues 1–48 (MERSPGEGPSPSPMDQPSAPSDPTDQPPAAHAKPDPGSGGQPAGPGAA) is disordered. A compositionally biased stretch (gly residues) spans 37–47 (GSGGQPAGPGA). The chain crosses the membrane as a helical span at residues 39–59 (GGQPAGPGAAGEALAVLTSFG). The Lumenal portion of the chain corresponds to 60 to 62 (RRL). Residues 63 to 83 (LVLIPVYLAGAVGLSVGFVLF) traverse the membrane as a helical segment. Residues 84–1104 (GLALYLGWRR…LMDNKDKGSS (1021 aa)) lie on the Cytoplasmic side of the membrane. Residues 91–116 (WRRVRDEKERSLRAARQLLDDEEQLT) are a coiled coil. The region spanning 135 to 313 (DVEKAEWLNK…LPNRLLVPLV (179 aa)) is the SMP-LTD domain. 4 C2 domains span residues 312–433 (LVPD…DDWF), 460–580 (QVLQ…QLSS), 627–751 (SVDA…DEWL), and 777–899 (LEEV…TLSS). At S324 the chain carries Phosphoserine; by CDK5. K344, D345, D357, D404, D406, D408, D410, and D411 together coordinate Ca(2+). A disordered region spans residues 617–641 (VDSENPQRGSSVDAPPRPCHTTPDS). K817 is modified (N6-acetyllysine). A phosphoserine mark is found at S820 and S941. Residues 924 to 950 (SHSYSHSSSSLSEEPELSGGPPHITSS) are disordered. The span at 925-946 (HSYSHSSSSLSEEPELSGGPPH) shows a compositional bias: low complexity. T948 carries the phosphothreonine modification. Phosphoserine occurs at positions 949 and 963. Residues 971–1093 (PLGQVKLTLW…DLSQGVARWY (123 aa)) enclose the C2 5 domain. Position 1009 is a phosphotyrosine (Y1009). Residues 1018-1025 (KNRGTKRR) are required for phosphatidylinositol 4,5-bisphosphate-dependent location at the cell membrane. A Phosphoserine modification is found at S1034.

It belongs to the extended synaptotagmin family. Interacts with ESYT2 and ESYT3. Interacts with ADGRD1; inhibiting the G-protein-coupled receptor activity of ADGRD1. Interaction with ADGRD1 is abolished when cytosolic calcium increases, relieving ADGRD1 G-protein-coupled receptor activity. Interacts (phosphorylated form) with SLC2A4. Phosphorylated on Ser residues in insulin-treated adipocytes (in vitro); this promotes interaction with SLC2A4. Widely expressed.

The protein localises to the endoplasmic reticulum membrane. It localises to the cell membrane. Binds calcium (via the C2 domains) and translocates to sites of contact between the endoplasmic reticulum and the cell membrane in response to increased cytosolic calcium levels. Helps tether the endoplasmic reticulum to the cell membrane and promotes the formation of appositions between the endoplasmic reticulum and the cell membrane. Acts as an inhibitor of ADGRD1 G-protein-coupled receptor activity in absence of cytosolic calcium. Binds glycerophospholipids in a barrel-like domain and may play a role in cellular lipid transport. This is Extended synaptotagmin-1 from Homo sapiens (Human).